The chain runs to 381 residues: Chaperone protein DnaJ (381 aa).

The 66-residue stretch at 4 to 69 (DYYEILGVTR…QKRAAYDRFG (66 aa)) folds into the J domain. The CR-type zinc-finger motif lies at 135 to 213 (GKTAQINIPS…CQGTRRVEKN (79 aa)). Residues C148, C151, C165, C168, C187, C190, C201, and C204 each coordinate Zn(2+). CXXCXGXG motif repeat units lie at residues 148 to 155 (CDACEGSG), 165 to 172 (CGTCHGAG), 187 to 194 (CPVCHGRG), and 201 to 208 (CPKCQGTR).

It belongs to the DnaJ family. As to quaternary structure, homodimer. Zn(2+) is required as a cofactor.

It localises to the cytoplasm. In terms of biological role, participates actively in the response to hyperosmotic and heat shock by preventing the aggregation of stress-denatured proteins and by disaggregating proteins, also in an autonomous, DnaK-independent fashion. Unfolded proteins bind initially to DnaJ; upon interaction with the DnaJ-bound protein, DnaK hydrolyzes its bound ATP, resulting in the formation of a stable complex. GrpE releases ADP from DnaK; ATP binding to DnaK triggers the release of the substrate protein, thus completing the reaction cycle. Several rounds of ATP-dependent interactions between DnaJ, DnaK and GrpE are required for fully efficient folding. Also involved, together with DnaK and GrpE, in the DNA replication of plasmids through activation of initiation proteins. This chain is Chaperone protein DnaJ, found in Bartonella henselae (strain ATCC 49882 / DSM 28221 / CCUG 30454 / Houston 1) (Rochalimaea henselae).